Consider the following 141-residue polypeptide: Cystatin-S (141 aa).

The N-terminal stretch at M1–A20 is a signal peptide. Phosphoserine occurs at positions 21 and 23. The short motif at Q76–G80 is the Secondary area of contact element. Cystine bridges form between C94–C104 and C118–C138.

It belongs to the cystatin family. Phosphorylated at both its N- and C-terminal regions. As to expression, expressed in submandibular and sublingual saliva but not in parotid saliva (at protein level). Expressed in saliva, tears, urine and seminal fluid.

It is found in the secreted. Its function is as follows. This protein strongly inhibits papain and ficin, partially inhibits stem bromelain and bovine cathepsin C, but does not inhibit porcine cathepsin B or clostripain. Papain is inhibited non-competitively. In Homo sapiens (Human), this protein is Cystatin-S (CST4).